We begin with the raw amino-acid sequence, 252 residues long: Redox-sensing transcriptional repressor Rex (252 aa).

The H-T-H motif DNA-binding region spans 26-65 (LYLRALTALSERSVPTVSSEELAAAAGVNSAKLRKDFSYL). Residue 100–105 (GIGNLG) coordinates NAD(+). Residues 222-252 (EAAAEGAIPAAASKESADKGPDGDVPAVMPA) are disordered.

This sequence belongs to the transcriptional regulatory Rex family. Homodimer.

Its subcellular location is the cytoplasm. Modulates transcription in response to changes in cellular NADH/NAD(+) redox state. The sequence is that of Redox-sensing transcriptional repressor Rex from Streptomyces avermitilis (strain ATCC 31267 / DSM 46492 / JCM 5070 / NBRC 14893 / NCIMB 12804 / NRRL 8165 / MA-4680).